The sequence spans 132 residues: Putative F-box protein At4g05620 (132 aa).

The F-box domain occupies 17–63 (QKKSLSLPHDVLVSCLAHVSRLHYSILSLVLKNFRSLIASPELYKTR).

This chain is Putative F-box protein At4g05620, found in Arabidopsis thaliana (Mouse-ear cress).